A 423-amino-acid polypeptide reads, in one-letter code: Isovaleryl-CoA dehydrogenase, mitochondrial (423 aa).

The transit peptide at 1–29 directs the protein to the mitochondrion; the sequence is MATATRLLGWRVASWRMRPPPAGFVSQRA. K55, K64, and K75 each carry N6-acetyllysine; alternate. K55, K64, and K75 each carry N6-succinyllysine; alternate. Residues 162-171 and 195-197 each bind FAD; these read LAMSEPNAGS and WIT. A substrate-binding site is contributed by S171. 219–220 serves as a coordination point for substrate; that stretch reads SR. K238 carries the post-translational modification N6-acetyllysine. N6-acetyllysine; alternate is present on K259. K259 carries the post-translational modification N6-succinyllysine; alternate. Residues Y274 and 281-284 contribute to the substrate site; that span reads DLER. The active-site Proton acceptor is E283. R309 is an FAD binding site. K315 carries the N6-succinyllysine modification. Residues Q320 and 377 to 381 each bind FAD; that span reads QCFGG. A substrate-binding site is contributed by 404–405; that stretch reads AG. 406–408 contributes to the FAD binding site; it reads TSE.

It belongs to the acyl-CoA dehydrogenase family. Homotetramer. FAD is required as a cofactor.

The protein localises to the mitochondrion matrix. It carries out the reaction 3-methylbutanoyl-CoA + oxidized [electron-transfer flavoprotein] + H(+) = 3-methylbut-2-enoyl-CoA + reduced [electron-transfer flavoprotein]. The catalysed reaction is pentanoyl-CoA + oxidized [electron-transfer flavoprotein] + H(+) = (2E)-pentenoyl-CoA + reduced [electron-transfer flavoprotein]. The enzyme catalyses hexanoyl-CoA + oxidized [electron-transfer flavoprotein] + H(+) = (2E)-hexenoyl-CoA + reduced [electron-transfer flavoprotein]. It catalyses the reaction butanoyl-CoA + oxidized [electron-transfer flavoprotein] + H(+) = (2E)-butenoyl-CoA + reduced [electron-transfer flavoprotein]. Its pathway is amino-acid degradation; L-leucine degradation; (S)-3-hydroxy-3-methylglutaryl-CoA from 3-isovaleryl-CoA: step 1/3. In terms of biological role, catalyzes the conversion of isovaleryl-CoA/3-methylbutanoyl-CoA to 3-methylbut-2-enoyl-CoA as an intermediate step in the leucine (Leu) catabolic pathway. To a lesser extent, is also able to catalyze the oxidation of other saturated short-chain acyl-CoA thioesters as pentanoyl-CoA, hexenoyl-CoA and butenoyl-CoA. This is Isovaleryl-CoA dehydrogenase, mitochondrial (IVD) from Pongo abelii (Sumatran orangutan).